The following is a 366-amino-acid chain: Hydroxyproline O-arabinosyltransferase 1 (366 aa).

The chain crosses the membrane as a helical; Signal-anchor span at residues 6-26 (TLFYPLLITLSVALITYNIII).

Ubiquitous.

It is found in the golgi apparatus. The protein localises to the cis-Golgi network membrane. It carries out the reaction trans-4-hydroxy-L-prolyl-[protein] + UDP-beta-L-arabinofuranose = O-(beta-L-arabinofuranosyl)-trans-4-hydroxy-L-prolyl-[protein] + UDP + H(+). Glycosyltransferase involved in the O-arabinosylation of several proteins including extensins and small signaling peptides. Catalyzes the transfer of the initial L-arabinose to the hydroxyl group of Hyp residues. Contributes redundantly with HPAT2 and HPAT3 to arabinosylation of EXT3. The protein is Hydroxyproline O-arabinosyltransferase 1 of Arabidopsis thaliana (Mouse-ear cress).